A 668-amino-acid chain; its full sequence is MAEQDLFSLALERKHLYLKTHYNNINNLEGMNILQKSLLYRTYLPFYQIQKEQAQQLDQFQKEKQSVHNNNNNNNSNNNNNNNNNNNNNNNNNNNNNNNNNNNNNNNNNNYNNYNNNNNNNESVNNIIINSEPVYTNGGNEKEDEKEYANIHSDKIKIDYVDLIGKPYILDKDGFLPPPLSKQEITFWVSQKLTETDFSIIDYYFNDIRKSDYEKKKHIKKFERKQRQKEKEELKLKEKEELKLKEKEKRKKEREEREEREKQEKQEQEQQQQPPKKKLKETNKSLTLSTTINNKDNNHNGYYYYYDNDNDNYNDGDDEKEKEKEKEKEKEKENENENEDENDTSMVNSEEWTEEEVNKMNEIRGKLSTADYNYWDKVSAHVKSKTAEQCQRKYNSRFLTPLKPKSKLKSSSKPGIPTSPITMKTNPHTDKGKRKIRQITDETIMKQKHDLFNSFKTTKRVDYLEPLDEVVTTTNDVENLDFGEDLDKAFSAVNVNYTNTNNNNNNNNNNNNNNNNNNNNNNNNNNNNNNNNNNNNNNNNNNNKERKRIDREHWDSYIRNSMGRFSAKPPPIKTTTTTTTTTSDSTLASINNINNNNNNNNNDDILKKPFSIFDESSQKKSAEIISKISSQCEERKKKEDRDVDEDGEDDYYFGGDNSKNGDDDDEII.

Disordered regions lie at residues 57 to 124 (LDQF…NESV), 246 to 357 (EKEK…EEEV), 403 to 432 (KPKS…TDKG), 497 to 546 (YTNT…NKER), 561 to 583 (SMGR…TTTS), and 631 to 668 (QCEE…DEII). A compositionally biased stretch (low complexity) spans 69–121 (NNNNNNNSNNNNNNNNNNNNNNNNNNNNNNNNNNNNNNNNNNYNNYNNNNNNN). Over residues 246-268 (EKEKRKKEREEREEREKQEKQEQ) the composition is skewed to basic and acidic residues. The segment covering 293–307 (NNKDNNHNGYYYYYD) has biased composition (low complexity). Acidic residues predominate over residues 308–318 (NDNDNYNDGDD). The span at 319–335 (EKEKEKEKEKEKEKENE) shows a compositional bias: basic and acidic residues. The 55-residue stretch at 344-398 (TSMVNSEEWTEEEVNKMNEIRGKLSTADYNYWDKVSAHVKSKTAEQCQRKYNSRF) folds into the Myb-like domain. The span at 501 to 542 (NNNNNNNNNNNNNNNNNNNNNNNNNNNNNNNNNNNNNNNNNN) shows a compositional bias: low complexity. Positions 632–641 (CEERKKKEDR) are enriched in basic and acidic residues. The segment covering 642 to 651 (DVDEDGEDDY) has biased composition (acidic residues).

The sequence is that of Myb-like protein W (mybW) from Dictyostelium discoideum (Social amoeba).